The primary structure comprises 563 residues: Rhodopsin kinase GRK1 (563 aa).

Residues 1 to 15 form an interaction with RCVRN region; that stretch reads MDFGSLETVVANSAF. Residues 1 to 189 are N-terminal; that stretch reads MDFGSLETVV…LEAQPMGEDW (189 aa). Ser-5 is subject to Phosphoserine. The residue at position 8 (Thr-8) is a Phosphothreonine. Ser-21 bears the Phosphoserine; by PKA and autocatalysis mark. The RGS domain maps to 58-175; it reads FESVCLEQPI…LGSLYFLRFL (118 aa). One can recognise a Protein kinase domain in the interval 190–455; it reads FLDFRVLGKG…CDKLRAHPLF (266 aa). Residues 196 to 204 and Lys-219 each bind ATP; that span reads LGKGGFGEV. Residue Asp-317 is the Proton acceptor of the active site. An AGC-kinase C-terminal domain is found at 456–521; that stretch reads KDLNWRQLEA…GNCPIPWQEE (66 aa). Residues 456-563 are C-terminal; it reads KDLNWRQLEA…SSKSGMCLVS (108 aa). Position 491 is a phosphoserine; by autocatalysis (Ser-491). Thr-492 carries the phosphothreonine; by autocatalysis modification. Residues 539–563 form a disordered region; sequence QMPDDMKGISGGSSSSSKSGMCLVS. The span at 550-563 shows a compositional bias: low complexity; sequence GSSSSSKSGMCLVS. Cys-560 bears the Cysteine methyl ester mark. A lipid anchor (S-farnesyl cysteine) is attached at Cys-560. A propeptide spans 561–563 (removed in mature form); that stretch reads LVS.

Belongs to the protein kinase superfamily. AGC Ser/Thr protein kinase family. GPRK subfamily. As to quaternary structure, interacts (via N-terminus) with RCVRN (via C-terminus); the interaction is Ca(2+)-dependent. Interacts (when prenylated) with PDE6D; this promotes release from membranes. May form a complex composed of RHO, GRK1 and RCVRN in a Ca(2+)-dependent manner; RCVRN prevents the interaction between GRK1 and RHO. Autophosphorylated, Ser-21 is a minor site of autophosphorylation compared to Ser-491 and Thr-492. Phosphorylation at Ser-21 is regulated by light and activated by cAMP. In terms of processing, farnesylation is required for full activity. In terms of tissue distribution, retinal-specific. Expressed in rods and cones cells.

Its subcellular location is the membrane. The protein localises to the cell projection. The protein resides in the cilium. It localises to the photoreceptor outer segment. The enzyme catalyses L-threonyl-[rhodopsin] + ATP = O-phospho-L-threonyl-[rhodopsin] + ADP + H(+). The catalysed reaction is L-seryl-[rhodopsin] + ATP = O-phospho-L-seryl-[rhodopsin] + ADP + H(+). Its activity is regulated as follows. Inhibited by RCVRN, which prevents the interaction between GRK1 and RHO. Inhibition is calcium-dependent. Inhibited by phosphorylation of Ser-21. In terms of biological role, retina-specific kinase involved in the signal turnoff via phosphorylation of rhodopsin (RHO), the G protein- coupled receptor that initiates the phototransduction cascade. This rapid desensitization is essential for scotopic vision and permits rapid adaptation to changes in illumination. May play a role in the maintenance of the outer nuclear layer in the retina. The sequence is that of Rhodopsin kinase GRK1 from Homo sapiens (Human).